Reading from the N-terminus, the 427-residue chain is uncharacterized protein (427 aa).

3 helical membrane passes run 10–30 (LAYLVFESVLQVVIIALAGFW), 43–63 (KIISLLNVDLFTPCLIFSKLA), and 71–91 (IFEIAIIPIFFGLTTGISFIS). Thr-199 carries the phosphothreonine modification. The residue at position 234 (Ser-234) is a Phosphoserine. Helical transmembrane passes span 253–273 (NLNPPLYSMIFAVVVAAIGPL), 288–308 (FAEAVTQLGSVSIPLILVVLG), 327–347 (LLIGSIIGRMILPSCFLLPII), 358–378 (ILDDPIFLVVGFLLTVSPPAI), and 397–417 (ILFWGYAVLSLPVSIIVVSGA).

The protein belongs to the auxin efflux carrier (TC 2.A.69) family.

It is found in the membrane. This is an uncharacterized protein from Saccharomyces cerevisiae (strain ATCC 204508 / S288c) (Baker's yeast).